A 194-amino-acid polypeptide reads, in one-letter code: RFKKIRRLGALPGLTSKRPRSGSDLKNQLRSGKRSQYRIRLEEKQKLRFHYGLTERQLLKYVHIAGKAKGSTGQVLLQLLEMRLDNILFRLGMASTIPGARQLVTHRHILVNGRIVDIPSYRCKPRDIITTKDKQRSKALIQDYTASSPHEELPNHLTIDPIQYKGLVNQIIDSKWIGLKINELLVVEYYSRQT.

The region spanning 82 to 143 (MRLDNILFRL…KQRSKALIQD (62 aa)) is the S4 RNA-binding domain.

This sequence belongs to the universal ribosomal protein uS4 family. In terms of assembly, part of the 30S ribosomal subunit. Contacts protein S5. The interaction surface between S4 and S5 is involved in control of translational fidelity.

It localises to the plastid. The protein resides in the chloroplast. Functionally, one of the primary rRNA binding proteins, it binds directly to 16S rRNA where it nucleates assembly of the body of the 30S subunit. In terms of biological role, with S5 and S12 plays an important role in translational accuracy. This is Small ribosomal subunit protein uS4c (rps4) from Bobartia gladiata (Sword rush-lily).